The sequence spans 322 residues: Lipoyl synthase (322 aa).

7 residues coordinate [4Fe-4S] cluster: Cys68, Cys73, Cys79, Cys94, Cys98, Cys101, and Ser309. The 219-residue stretch at 80 to 298 folds into the Radical SAM core domain; sequence FNHGTASFMI…RVAGVEMGFS (219 aa).

Belongs to the radical SAM superfamily. Lipoyl synthase family. It depends on [4Fe-4S] cluster as a cofactor.

The protein localises to the cytoplasm. The catalysed reaction is [[Fe-S] cluster scaffold protein carrying a second [4Fe-4S](2+) cluster] + N(6)-octanoyl-L-lysyl-[protein] + 2 oxidized [2Fe-2S]-[ferredoxin] + 2 S-adenosyl-L-methionine + 4 H(+) = [[Fe-S] cluster scaffold protein] + N(6)-[(R)-dihydrolipoyl]-L-lysyl-[protein] + 4 Fe(3+) + 2 hydrogen sulfide + 2 5'-deoxyadenosine + 2 L-methionine + 2 reduced [2Fe-2S]-[ferredoxin]. The protein operates within protein modification; protein lipoylation via endogenous pathway; protein N(6)-(lipoyl)lysine from octanoyl-[acyl-carrier-protein]: step 2/2. Functionally, catalyzes the radical-mediated insertion of two sulfur atoms into the C-6 and C-8 positions of the octanoyl moiety bound to the lipoyl domains of lipoate-dependent enzymes, thereby converting the octanoylated domains into lipoylated derivatives. This chain is Lipoyl synthase, found in Idiomarina loihiensis (strain ATCC BAA-735 / DSM 15497 / L2-TR).